The chain runs to 434 residues: Putative nuclease OPG089 (434 aa).

Mg(2+) is bound by residues D33, D74, E168, D170, D196, and D198.

This sequence belongs to the XPG/RAD2 endonuclease family. FEN1 subfamily. The cofactor is Mg(2+).

It localises to the virion. Putative nuclease that seems to be required for double-strand break repair, homologous recombination, and production of full-length viral genomic DNA. This is Putative nuclease OPG089 (OPG089) from Homo sapiens (Human).